The sequence spans 97 residues: Small ribosomal subunit protein bS6 (97 aa).

The protein belongs to the bacterial ribosomal protein bS6 family.

In terms of biological role, binds together with bS18 to 16S ribosomal RNA. In Listeria innocua serovar 6a (strain ATCC BAA-680 / CLIP 11262), this protein is Small ribosomal subunit protein bS6.